We begin with the raw amino-acid sequence, 374 residues long: Transaldolase (374 aa).

The Schiff-base intermediate with substrate role is filled by lysine 140.

It belongs to the transaldolase family. Type 2 subfamily.

The protein localises to the cytoplasm. The enzyme catalyses D-sedoheptulose 7-phosphate + D-glyceraldehyde 3-phosphate = D-erythrose 4-phosphate + beta-D-fructose 6-phosphate. It functions in the pathway carbohydrate degradation; pentose phosphate pathway; D-glyceraldehyde 3-phosphate and beta-D-fructose 6-phosphate from D-ribose 5-phosphate and D-xylulose 5-phosphate (non-oxidative stage): step 2/3. In terms of biological role, transaldolase is important for the balance of metabolites in the pentose-phosphate pathway. This chain is Transaldolase, found in Renibacterium salmoninarum (strain ATCC 33209 / DSM 20767 / JCM 11484 / NBRC 15589 / NCIMB 2235).